Reading from the N-terminus, the 739-residue chain is Long-chain-fatty-acid--CoA ligase ACSBG2 (739 aa).

Residues 287-295, 478-483, Asp556, Arg571, and Lys684 contribute to the ATP site; these read TSGTTGQPK and ELYGMS.

This sequence belongs to the ATP-dependent AMP-binding enzyme family. Bubblegum subfamily.

It localises to the cytoplasm. The catalysed reaction is a long-chain fatty acid + ATP + CoA = a long-chain fatty acyl-CoA + AMP + diphosphate. It catalyses the reaction (5Z,8Z,11Z,14Z)-eicosatetraenoate + ATP + CoA = (5Z,8Z,11Z,14Z)-eicosatetraenoyl-CoA + AMP + diphosphate. It carries out the reaction hexadecanoate + ATP + CoA = hexadecanoyl-CoA + AMP + diphosphate. The enzyme catalyses (9Z)-octadecenoate + ATP + CoA = (9Z)-octadecenoyl-CoA + AMP + diphosphate. The catalysed reaction is (9Z,12Z)-octadecadienoate + ATP + CoA = (9Z,12Z)-octadecadienoyl-CoA + AMP + diphosphate. It catalyses the reaction tetracosanoate + ATP + CoA = tetracosanoyl-CoA + AMP + diphosphate. In terms of biological role, catalyzes the conversion of fatty acids such as long chain and very long-chain fatty acids to their active form acyl-CoAs for both synthesis of cellular lipids, and degradation via beta-oxidation. Can activate diverse saturated, monosaturated and polyunsaturated fatty acids. The chain is Long-chain-fatty-acid--CoA ligase ACSBG2 from Xenopus laevis (African clawed frog).